Here is a 245-residue protein sequence, read N- to C-terminus: Short-chain dehydrogenase/reductase pyiH (245 aa).

NADP(+)-binding residues include isoleucine 18, arginine 42, aspartate 68, and asparagine 95. The active-site Proton donor is the serine 150.

This sequence belongs to the short-chain dehydrogenases/reductases (SDR) family.

Its pathway is mycotoxin biosynthesis. Short-chain dehydrogenase/reductase; part of the gene cluster that mediates the biosynthesis of the mycotoxin pyrichalasin H, a tyrosine-derived cytochalasan that inhibits the growth of rice seedlings, but also inhibits lymphocyte capping and actin polymerization and alters cell morphology. Pyrichalasin H is indicated as the responsible agent for the genus-specific pathogenicity of M.grisea toward crabgrass. The first step in the pathway is catalyzed by the O-methyltransferase pyiA which methylates free tyrosine to generate the precursor O-methyltyrosine. The hybrid PKS-NRPS pyiS, assisted by the enoyl reductase pyiC, are responsible for fusion of the O-methyltyrosine precursor and the polyketide backbone. The polyketide synthase module (PKS) of pyiS is responsible for the synthesis of the polyketide backbone and the downstream nonribosomal peptide synthetase (NRPS) amidates the carboxyl end of the polyketide with the O-methyltyrosine precursor. As the NRPS A-domain demonstrates substrate tolerance, pyiS can also use phenylalanine, tyrosine and even para-chlorophenylalanine as amino acid precursor, which leads to the production of novel cytochalasans, including halogenated cytochalasans. Because pyiS lacks a designated enoylreductase (ER) domain, the required activity is provided the enoyl reductase pyiC. Reduction by the hydrolyase pyiE leads to 1,5-dihydropyrrolone, which is substrate for dehydration and intra-molecular Diels-Alder cyclization by the Diels-Alderase pyiF to yield the required isoindolone-fused macrocycle. The tailoring cytochrome P450 monooxygenases piyD and piyG catalyze the hydroxylation at C-18 and C-7, respectivily, whereas the short-chain dehydrogenase/reductase pyiH reduces the carbonyl at C-21 in preparation for the transfer of an acetyl group by the acetyltransferase pyiB. These 3 reactions whose order is not clear yet, lead to the production of O-methylpyrichalasin J, a deacetylated pyrichalasin H. Finally, pyiB to converts O-methylpyrichalasin J into the final product pyrichalasin H via acetylation of C-21. In Pyricularia grisea (Crabgrass-specific blast fungus), this protein is Short-chain dehydrogenase/reductase pyiH.